A 290-amino-acid chain; its full sequence is Nucleoid occlusion protein (290 aa).

The segment at residues 153–172 (EALAQRLGKGQSTIANKLRL) is a DNA-binding region (H-T-H motif).

Belongs to the ParB family.

The protein localises to the cytoplasm. It localises to the nucleoid. Its function is as follows. Effects nucleoid occlusion by binding relatively nonspecifically to DNA and preventing the assembly of the division machinery in the vicinity of the nucleoid, especially under conditions that disturb the cell cycle. It helps to coordinate cell division and chromosome segregation by preventing the formation of the Z ring through the nucleoid, which would cause chromosome breakage. The sequence is that of Nucleoid occlusion protein from Bacillus cytotoxicus (strain DSM 22905 / CIP 110041 / 391-98 / NVH 391-98).